The primary structure comprises 208 residues: Proheparin-binding EGF-like growth factor (208 aa).

The N-terminal stretch at 1-19 is a signal peptide; that stretch reads MKLLPSVVLKLFLAAVLSA. Positions 20-62 are cleaved as a propeptide — or 72, or 73, or 76, or 81; the sequence is LVTGESLERLRRGLAAGTSNPDPPTVSTDQLLPLGGGRDRKVR. Topologically, residues 20–160 are extracellular; sequence LVTGESLERL…ENRLYTYDHT (141 aa). A disordered region spans residues 33–56; it reads LAAGTSNPDPPTVSTDQLLPLGGG. Residues 36-49 show a composition bias toward polar residues; the sequence is GTSNPDPPTVSTDQ. Residue T37 is glycosylated (O-linked (GalNAc...) threonine). O-linked (GalNAc...) serine glycosylation is present at S38. Residues T44, T47, T75, and T85 are each glycosylated (O-linked (GalNAc...) threonine). The interval 82–104 is disordered; that stretch reads ALATPNKEEHGKRKKKGKGLGKK. The segment covering 93–102 has biased composition (basic residues); the sequence is KRKKKGKGLG. The EGF-like domain occupies 104-144; that stretch reads KRDPCLRKYKDFCIHGECKYVKELRAPSCICHPGYHGERCH. Intrachain disulfides connect C108–C121, C116–C132, and C134–C143. The propeptide at 149-208 is C-terminal; that stretch reads PVENRLYTYDHTTILAVVAVVLSSVCLLVIVGLLMFRYHRRGGYDVENEEKVKLGMTNSH. The chain crosses the membrane as a helical span at residues 161–184; that stretch reads TILAVVAVVLSSVCLLVIVGLLMF. Topologically, residues 185–208 are cytoplasmic; it reads RYHRRGGYDVENEEKVKLGMTNSH.

As to quaternary structure, interacts with FBLN1. Interacts with EGFR and ERBB4. Post-translationally, several N-termini have been identified by direct sequencing. The forms with N-termini 63, 73 and 74 have been tested and found to be biologically active. O-glycosylated with core 1 or possibly core 8 glycans. Thr-47 is a minor glycosylation site compared to Thr-44.

The protein localises to the secreted. The protein resides in the extracellular space. It is found in the cell membrane. Growth factor that mediates its effects via EGFR, ERBB2 and ERBB4. Required for normal cardiac valve formation and normal heart function. Promotes smooth muscle cell proliferation. May be involved in macrophage-mediated cellular proliferation. It is mitogenic for fibroblasts, but not endothelial cells. It is able to bind EGF receptor/EGFR with higher affinity than EGF itself and is a far more potent mitogen for smooth muscle cells than EGF. Also acts as a diphtheria toxin receptor. The polypeptide is Proheparin-binding EGF-like growth factor (HBEGF) (Homo sapiens (Human)).